We begin with the raw amino-acid sequence, 310 residues long: Aspartate carbamoyltransferase catalytic subunit 3 (310 aa).

Residues Arg55 and Thr56 each coordinate carbamoyl phosphate. Lys85 serves as a coordination point for L-aspartate. Carbamoyl phosphate contacts are provided by Arg106, His134, and Gln137. Arg167 and Arg228 together coordinate L-aspartate. The carbamoyl phosphate site is built by Leu266 and Pro267.

Belongs to the aspartate/ornithine carbamoyltransferase superfamily. ATCase family. In terms of assembly, heterododecamer (2C3:3R2) of six catalytic PyrB chains organized as two trimers (C3), and six regulatory PyrI chains organized as three dimers (R2).

It catalyses the reaction carbamoyl phosphate + L-aspartate = N-carbamoyl-L-aspartate + phosphate + H(+). It functions in the pathway pyrimidine metabolism; UMP biosynthesis via de novo pathway; (S)-dihydroorotate from bicarbonate: step 2/3. In terms of biological role, catalyzes the condensation of carbamoyl phosphate and aspartate to form carbamoyl aspartate and inorganic phosphate, the committed step in the de novo pyrimidine nucleotide biosynthesis pathway. This Shewanella halifaxensis (strain HAW-EB4) protein is Aspartate carbamoyltransferase catalytic subunit 3.